The chain runs to 217 residues: Ras-related protein RABA1e (217 aa).

Position 20-27 (20-27) interacts with GTP; sequence GDSGVGKS. The Effector region motif lies at 42–50; the sequence is SKSTIGVEF. Residues 68–72, 126–129, and 156–157 contribute to the GTP site; these read DTAGQ, NKAD, and SA. S-geranylgeranyl cysteine attachment occurs at residues cysteine 214 and cysteine 215.

Belongs to the small GTPase superfamily. Rab family.

Its subcellular location is the cell membrane. Intracellular vesicle trafficking and protein transport. This Arabidopsis thaliana (Mouse-ear cress) protein is Ras-related protein RABA1e (RABA1E).